Consider the following 265-residue polypeptide: Glutamate racemase (265 aa).

Substrate is bound by residues 12–13 and 44–45; these read DS and YG. C75 acts as the Proton donor/acceptor in catalysis. 76–77 provides a ligand contact to substrate; sequence NT. C186 functions as the Proton donor/acceptor in the catalytic mechanism. 187-188 contacts substrate; that stretch reads TH.

It belongs to the aspartate/glutamate racemases family.

The catalysed reaction is L-glutamate = D-glutamate. It functions in the pathway cell wall biogenesis; peptidoglycan biosynthesis. Its function is as follows. Provides the (R)-glutamate required for cell wall biosynthesis. In Pseudomonas putida (strain ATCC 700007 / DSM 6899 / JCM 31910 / BCRC 17059 / LMG 24140 / F1), this protein is Glutamate racemase.